The chain runs to 161 residues: Copper transporter 1 (161 aa).

2 helical membrane passes run 55–75 (GGMYALALIFVFALAVIVEFL) and 109–129 (VAYLLMLALMSFNGGVFLVAV).

Belongs to the copper transporter (Ctr) (TC 1.A.56) family. SLC31A subfamily. Self-interacts. Interacts with SWEET11 and COPT2.

It is found in the cell membrane. In terms of biological role, involved in the transport of copper, in cooperation with SWEET11 and COPT2. Contributes to the removal of copper (Cu) from xylem, and thus to the sensitivity toward bacterial pathogens such as X.oryzae pv. oryzae (Xoo). The chain is Copper transporter 1 (COPT1) from Oryza sativa subsp. japonica (Rice).